The primary structure comprises 105 residues: Nucleoid-associated protein Lm4b_02677 (105 aa).

A compositionally biased stretch (low complexity) spans 1 to 16 (MRGMGNMQGMMKQMQK). Positions 1-23 (MRGMGNMQGMMKQMQKMQKEMAK) are disordered.

This sequence belongs to the YbaB/EbfC family. As to quaternary structure, homodimer.

The protein resides in the cytoplasm. It is found in the nucleoid. Its function is as follows. Binds to DNA and alters its conformation. May be involved in regulation of gene expression, nucleoid organization and DNA protection. The chain is Nucleoid-associated protein Lm4b_02677 from Listeria monocytogenes serotype 4b (strain CLIP80459).